The chain runs to 176 residues: Putative L,D-transpeptidase YqjB (176 aa).

Residues 1-25 (MRFFLCSIFMMISPIWPLGENPLPG) form the signal peptide. The 125-residue stretch at 27–151 (PYVIVNKRTN…IPVGTRVLIT (125 aa)) folds into the L,D-TPase catalytic domain. The active-site Proton donor/acceptor is His111. The active-site Nucleophile is Cys127.

It belongs to the YkuD family.

Its pathway is cell wall biogenesis; peptidoglycan biosynthesis. This Bacillus subtilis (strain 168) protein is Putative L,D-transpeptidase YqjB (yqjB).